The sequence spans 410 residues: Magnesium transporter NIPA3 (410 aa).

Residues 1–67 lie on the Extracellular side of the membrane; that stretch reads MGAQVRLPPG…ISANVENKYS (67 aa). Residues Asn-25, Asn-35, Asn-50, and Asn-55 are each glycosylated (N-linked (GlcNAc...) asparagine). The chain crosses the membrane as a helical span at residues 68-88; sequence LYVGLVLAVSSSIFIGSSFIL. Residues 89 to 114 are Cytoplasmic-facing; sequence KKKGLLQLASKGFTRAGQGGHSYLKE. The helical transmembrane segment at 115 to 135 threads the bilayer; sequence WLWWVGLLSMGAGEAANFAAY. Position 136 (Ala-136) is a topological domain, extracellular. Residues 137–157 traverse the membrane as a helical segment; it reads FAPATLVTPLGALSVLISAIL. The Cytoplasmic portion of the chain corresponds to 158 to 165; the sequence is SSYFLNEH. A helical transmembrane segment spans residues 166-186; that stretch reads LNIHGKIGCILSILGSTVMVI. Topologically, residues 187 to 207 are extracellular; sequence HAPQEEEVTSLHEMEMKLRDP. A helical membrane pass occupies residues 208-228; that stretch reads GFISFAVIITVISLVLILIVA. Residues 229-233 lie on the Cytoplasmic side of the membrane; sequence PKKGQ. A helical membrane pass occupies residues 234-254; the sequence is TNILVYISICSLIGAFSVSSV. The Extracellular segment spans residues 255-273; it reads KGLGIAIKELIEWKPVYKH. Residues 274–294 traverse the membrane as a helical segment; sequence PLVFVLLAVLVLSVTTQINYL. At 295–305 the chain is on the cytoplasmic side; the sequence is NKALDTFNTSL. A helical transmembrane segment spans residues 306–326; it reads VTPIYYVFFTSMVVTCSAILF. Over 327 to 336 the chain is Extracellular; that stretch reads QEWYGMTAGD. A helical transmembrane segment spans residues 337–357; that stretch reads IIGTLSGFFTIIIGIFLLHAF. Topologically, residues 358-410 are cytoplasmic; it reads KNTDITWSELTSTAKKEAVSLNVNENNYVLLENLECSAPGYNDDVTLFSRTDD.

The protein belongs to the NIPA family. As to expression, expressed in the pancreatic islets.

Its subcellular location is the golgi apparatus membrane. The catalysed reaction is Mg(2+)(in) = Mg(2+)(out). Acts as a Mg(2+) transporter. Can also transport other divalent cations such as Fe(2+), Sr(2+), Ba(2+), Mn(2+), Cu(2+) and Co(2+) but to a much less extent than Mg(2+). In Homo sapiens (Human), this protein is Magnesium transporter NIPA3 (NIPAL1).